The following is a 243-amino-acid chain: 2-C-methyl-D-erythritol 4-phosphate cytidylyltransferase (243 aa).

Belongs to the IspD/TarI cytidylyltransferase family. IspD subfamily.

The enzyme catalyses 2-C-methyl-D-erythritol 4-phosphate + CTP + H(+) = 4-CDP-2-C-methyl-D-erythritol + diphosphate. It participates in isoprenoid biosynthesis; isopentenyl diphosphate biosynthesis via DXP pathway; isopentenyl diphosphate from 1-deoxy-D-xylulose 5-phosphate: step 2/6. Catalyzes the formation of 4-diphosphocytidyl-2-C-methyl-D-erythritol from CTP and 2-C-methyl-D-erythritol 4-phosphate (MEP). The polypeptide is 2-C-methyl-D-erythritol 4-phosphate cytidylyltransferase (Pelodictyon phaeoclathratiforme (strain DSM 5477 / BU-1)).